Consider the following 358-residue polypeptide: GMP reductase (358 aa).

NADP(+)-binding positions include 26 to 27, Lys-78, 130 to 132, and 181 to 182; these read SR, DVA, and IG. K(+) is bound by residues Gly-182, Gly-184, and Cys-187. Cys-187 (thioimidate intermediate) is an active-site residue. Residue Thr-189 is the Proton donor/acceptor of the active site. Arg-190 lines the K(+) pocket. Residues 220–222, 243–244, 269–271, and 287–291 each bind GMP; these read DGG, GG, GMS, and RASEG. NADP(+)-binding positions include Met-270, 286 to 287, and 315 to 318; these read YR and SACT.

This sequence belongs to the IMPDH/GMPR family. GuaC type 1 subfamily. As to quaternary structure, homotetramer.

It catalyses the reaction IMP + NH4(+) + NADP(+) = GMP + NADPH + 2 H(+). Functionally, catalyzes the irreversible NADPH-dependent deamination of GMP to IMP. It functions in the conversion of nucleobase, nucleoside and nucleotide derivatives of G to A nucleotides, and in maintaining the intracellular balance of A and G nucleotides. This Caenorhabditis elegans protein is GMP reductase.